Consider the following 484-residue polypeptide: MFPNSILGRPPFTPTHQQHNNFFALSPTLYSHQQLIDAQFNFQNVDLSRAVSLQPLTYGTVSPIQTSTSPLFRGRKRISDEKAFRLDGKRQRFHSPHQEPTIINQLVPLSGDRRYSMPPLFHTHYVPEIVRCVPPLREIPLLEPREITLPEAKDKLSQQILELFETCQQQASDLKKKELCRAQLQREIQLLFPQSRLFLVGSSLNGFGARSSDGDLCLVVKEEPCFFQVNQKTEARHILTLVHKHFCTRLSGYIERPQLIRAKVPIVKFRDKVSCVEFDLNVNNTVGIRNTFLLRTYAYLENRVRPLVLVIKKWASHHEINDASRGTLSSYSLVLMVLHYLQTLPEPILPSLQKIYPESFSTSVQLHLVHHAPCNVPPYLSKNESSLGDLLLGFLKYYATEFDWNTQMISVREAKAIPRPDDMEWRNKYICVEEPFDGTNTARAVHEKQKFDMIKDQFLKSWQRLKNKRDLNSVLPLRAATLKR.

Phosphoserine occurs at positions 62 and 69. The Nuclear localization signal motif lies at 76-92 (KRISDEKAFRLDGKRQR). A Phosphoserine modification is found at serine 95. Aspartate 213 and aspartate 215 together coordinate Mg(2+). Residues 386 to 440 (SLGDLLLGFLKYYATEFDWNTQMISVREAKAIPRPDDMEWRNKYICVEEPFDGTN) form the PAP-associated domain.

This sequence belongs to the DNA polymerase type-B-like family. GLD2 subfamily. As to quaternary structure, interacts with CPEB1, CPEB2, CPSF1 and PABPC1. Interacts with QKI isoform QKI7; promoting recruitment to miRNA miR-122 and miR-122 stabilization. The cofactor is Mg(2+). Mn(2+) is required as a cofactor.

The protein resides in the cytoplasm. The protein localises to the nucleus. The enzyme catalyses RNA(n) + ATP = RNA(n)-3'-adenine ribonucleotide + diphosphate. Cytoplasmic poly(A) RNA polymerase that adds successive AMP monomers to the 3'-end of specific RNAs, forming a poly(A) tail. In contrast to the canonical nuclear poly(A) RNA polymerase, it only adds poly(A) to selected cytoplasmic mRNAs. Does not play a role in replication-dependent histone mRNA degradation. Adds a single nucleotide to the 3' end of specific miRNAs, monoadenylation stabilizes and prolongs the activity of some but not all miRNAs. The polypeptide is Poly(A) RNA polymerase GLD2 (Rattus norvegicus (Rat)).